We begin with the raw amino-acid sequence, 25 residues long: Dermaseptin-5.1TR (25 aa).

Position 25 is a valine amide (valine 25).

Expressed by the skin glands.

It localises to the secreted. Its function is as follows. Has antimicrobial activity. This Phyllomedusa trinitatis (Trinidad leaf frog) protein is Dermaseptin-5.1TR.